The chain runs to 565 residues: Periplasmic trehalase (565 aa).

Positions 1-30 (MKSPAPSRPQKMALIPACIFLCFAALSVQA) are cleaved as a signal peptide. Residues Arg152, 159 to 160 (WD), Asn196, 205 to 207 (RSQ), 277 to 279 (RPE), and Gly310 contribute to the substrate site. Active-site proton donor/acceptor residues include Asp312 and Glu496. Glu511 provides a ligand contact to substrate. The segment at 539-565 (CDNVPATRPLSESTTQPLKQKEAEPTP) is disordered.

This sequence belongs to the glycosyl hydrolase 37 family. Monomer.

The protein localises to the periplasm. It carries out the reaction alpha,alpha-trehalose + H2O = alpha-D-glucose + beta-D-glucose. Functionally, provides the cells with the ability to utilize trehalose at high osmolarity by splitting it into glucose molecules that can subsequently be taken up by the phosphotransferase-mediated uptake system. This chain is Periplasmic trehalase, found in Escherichia coli O45:K1 (strain S88 / ExPEC).